We begin with the raw amino-acid sequence, 156 residues long: MKFLVYAVGHKMPEWIAAGFQEYAKRMPREANIELLEIKPERRDSGKKVEQLLAAEGARIRALLPSNCRLVVMDERGSQWTTAGLAHAIGSWMKDGGDTAFLIGGADGLDPALRNAADEVLALSALTLPHGLVRILLAEQLYRAISLIKGHPYHRA.

Residues Gly-104 and 123–128 each bind S-adenosyl-L-methionine; that span reads LSALTL.

Belongs to the RNA methyltransferase RlmH family. In terms of assembly, homodimer.

It localises to the cytoplasm. The enzyme catalyses pseudouridine(1915) in 23S rRNA + S-adenosyl-L-methionine = N(3)-methylpseudouridine(1915) in 23S rRNA + S-adenosyl-L-homocysteine + H(+). In terms of biological role, specifically methylates the pseudouridine at position 1915 (m3Psi1915) in 23S rRNA. The chain is Ribosomal RNA large subunit methyltransferase H from Nitrosospira multiformis (strain ATCC 25196 / NCIMB 11849 / C 71).